A 143-amino-acid polypeptide reads, in one-letter code: Transcriptional regulator MraZ (143 aa).

2 consecutive SpoVT-AbrB domains span residues 5–47 (EFEH…PMTE) and 76–119 (ATEC…SAER).

Belongs to the MraZ family. Forms oligomers.

The protein resides in the cytoplasm. The protein localises to the nucleoid. This Levilactobacillus brevis (strain ATCC 367 / BCRC 12310 / CIP 105137 / JCM 1170 / LMG 11437 / NCIMB 947 / NCTC 947) (Lactobacillus brevis) protein is Transcriptional regulator MraZ.